Reading from the N-terminus, the 1228-residue chain is Probable phospholipid-transporting ATPase 5 (1228 aa).

The Cytoplasmic segment spans residues 1–74 (MARGRIRSKL…TTRYNLITFF (74 aa)). Residues 75 to 96 (PKSLYEQFHRAANLYFLVAAIL) form a helical membrane-spanning segment. Residues 97–100 (SVFP) are Extracellular-facing. The helical transmembrane segment at 101-123 (LSPFNKWSMIAPLVFVVGLSMLK) threads the bilayer. Topologically, residues 124–305 (EALEDWRRFM…SRIERTMDYI (182 aa)) are cytoplasmic. Residues 306-327 (IYTLLVLLILISCISSSGFAWE) form a helical membrane-spanning segment. Topologically, residues 328–359 (TEFHMPKMWYLRPGEPIDFTNPINPIYAGVVH) are extracellular. The helical transmembrane segment at 360 to 377 (LITALLLYGYLIPISLYV) threads the bilayer. The Cytoplasmic segment spans residues 378 to 934 (SIEVVKVWQA…HGHWCYKRIA (557 aa)). The active-site 4-aspartylphosphate intermediate is D425. K616 is covalently cross-linked (Glycyl lysine isopeptide (Lys-Gly) (interchain with G-Cter in ubiquitin)). The Mg(2+) site is built by D879 and D883. A helical transmembrane segment spans residues 935–954 (QMICYFFYKNIAFGLTLFYF). Topologically, residues 955 to 968 (EAFTGFSGQSVYND) are extracellular. A helical transmembrane segment spans residues 969 to 988 (YYLLLFNVVLTSLPVIALGV). Residues 989–1018 (FEQDVSSEICLQFPALYQQGTKNLFFDWSR) are Cytoplasmic-facing. Residues 1019–1041 (ILGWMCNGVYASLVIFFLNIGII) form a helical membrane-spanning segment. Residues 1042-1054 (YSQAFRDNGQTAD) are Extracellular-facing. The chain crosses the membrane as a helical span at residues 1055–1077 (MDAVGTTMFTCIIWAANVQIALT). Topologically, residues 1078–1083 (MSHFTW) are cytoplasmic. Residues 1084-1104 (IQHVLIWGSIGMWYLFVAIYS) form a helical membrane-spanning segment. At 1105-1117 (MMPPSYSGNIYRI) the chain is on the extracellular side. Residues 1118–1146 (LDEILAPAPIYWMATLLVTVAAVLPYVAH) traverse the membrane as a helical segment. Topologically, residues 1147 to 1228 (IAFQRFLNPL…AQDAMSPRSL (82 aa)) are cytoplasmic.

Belongs to the cation transport ATPase (P-type) (TC 3.A.3) family. Type IV subfamily.

The protein localises to the membrane. It carries out the reaction ATP + H2O + phospholipidSide 1 = ADP + phosphate + phospholipidSide 2.. In terms of biological role, involved in transport of phospholipids. The chain is Probable phospholipid-transporting ATPase 5 from Arabidopsis thaliana (Mouse-ear cress).